A 373-amino-acid chain; its full sequence is Eukaryotic translation initiation factor 3 subunit M (373 aa).

Residue Ser2 is modified to N-acetylserine. Residues Ser2 and Ser152 each carry the phosphoserine modification. A PCI domain is found at 180–338 (AASKVMVELL…RKVVVSHSTH (159 aa)). The residue at position 253 (Lys253) is an N6-acetyllysine. Ser366 bears the Phosphoserine mark.

It belongs to the eIF-3 subunit M family. In terms of assembly, component of the eukaryotic translation initiation factor 3 (eIF-3) complex, which is composed of 13 subunits: EIF3A, EIF3B, EIF3C, EIF3D, EIF3E, EIF3F, EIF3G, EIF3H, EIF3I, EIF3J, EIF3K, EIF3L and EIF3M. The eIF-3 complex appears to include 3 stable modules: module A is composed of EIF3A, EIF3B, EIF3G and EIF3I; module B is composed of EIF3F, EIF3H, and EIF3M; and module C is composed of EIF3C, EIF3D, EIF3E, EIF3K and EIF3L. EIF3C of module C binds EIF3B of module A and EIF3H of module B, thereby linking the three modules. EIF3J is a labile subunit that binds to the eIF-3 complex via EIF3B. The eIF-3 complex interacts with RPS6KB1 under conditions of nutrient depletion. Mitogenic stimulation leads to binding and activation of a complex composed of MTOR and RPTOR, leading to phosphorylation and release of RPS6KB1 and binding of EIF4B to eIF-3.

Its subcellular location is the cytoplasm. Functionally, component of the eukaryotic translation initiation factor 3 (eIF-3) complex, which is required for several steps in the initiation of protein synthesis. The eIF-3 complex associates with the 40S ribosome and facilitates the recruitment of eIF-1, eIF-1A, eIF-2:GTP:methionyl-tRNAi and eIF-5 to form the 43S pre-initiation complex (43S PIC). The eIF-3 complex stimulates mRNA recruitment to the 43S PIC and scanning of the mRNA for AUG recognition. The eIF-3 complex is also required for disassembly and recycling of post-termination ribosomal complexes and subsequently prevents premature joining of the 40S and 60S ribosomal subunits prior to initiation. The eIF-3 complex specifically targets and initiates translation of a subset of mRNAs involved in cell proliferation, including cell cycling, differentiation and apoptosis, and uses different modes of RNA stem-loop binding to exert either translational activation or repression. In Bos taurus (Bovine), this protein is Eukaryotic translation initiation factor 3 subunit M.